A 180-amino-acid polypeptide reads, in one-letter code: Shikimate kinase (180 aa).

19–24 is a binding site for ATP; that stretch reads GAGKTT. T23 is a binding site for Mg(2+). Residues D41, R65, and G87 each coordinate substrate. R125 contacts ATP. Substrate is bound at residue R144.

Belongs to the shikimate kinase family. As to quaternary structure, monomer. Mg(2+) serves as cofactor.

The protein resides in the cytoplasm. The enzyme catalyses shikimate + ATP = 3-phosphoshikimate + ADP + H(+). It functions in the pathway metabolic intermediate biosynthesis; chorismate biosynthesis; chorismate from D-erythrose 4-phosphate and phosphoenolpyruvate: step 5/7. In terms of biological role, catalyzes the specific phosphorylation of the 3-hydroxyl group of shikimic acid using ATP as a cosubstrate. This chain is Shikimate kinase, found in Acinetobacter baylyi (strain ATCC 33305 / BD413 / ADP1).